Reading from the N-terminus, the 361-residue chain is Tetrathionate reductase subunit C (361 aa).

9 consecutive transmembrane segments (helical) span residues 26–46, 53–73, 104–124, 160–180, 193–213, 233–253, 258–278, 288–308, and 334–354; these read FSYA…LALL, AIPM…LGPL, ALYG…FALL, LAAI…MLFF, LMLP…ALIL, GAAA…WGMW, FAAV…TFIL, ITPI…WNLI, and AVSP…IFPM.

This sequence belongs to the NrfD family. In terms of assembly, probably composed of three subunits: TtrA, TtrB and TtrC.

Its subcellular location is the cell membrane. Part of a membrane-bound tetrathionate reductase that catalyzes the reduction of tetrathionate to thiosulfate. TtrC probably anchors TtrA and TtrB to the external face of the cytoplasmic membrane. May transfer electrons from membrane quinol to TtrB. This chain is Tetrathionate reductase subunit C (ttrC), found in Archaeoglobus fulgidus (strain ATCC 49558 / DSM 4304 / JCM 9628 / NBRC 100126 / VC-16).